We begin with the raw amino-acid sequence, 270 residues long: Glucosamine-6-phosphate deaminase (270 aa).

Asp68 (proton acceptor; for enolization step) is an active-site residue. The active-site For ring-opening step is Asp145. The Proton acceptor; for ring-opening step role is filled by His147. The active-site For ring-opening step is the Glu152.

It belongs to the glucosamine/galactosamine-6-phosphate isomerase family. NagB subfamily.

It carries out the reaction alpha-D-glucosamine 6-phosphate + H2O = beta-D-fructose 6-phosphate + NH4(+). The protein operates within amino-sugar metabolism; N-acetylneuraminate degradation; D-fructose 6-phosphate from N-acetylneuraminate: step 5/5. In terms of biological role, catalyzes the reversible isomerization-deamination of glucosamine 6-phosphate (GlcN6P) to form fructose 6-phosphate (Fru6P) and ammonium ion. This chain is Glucosamine-6-phosphate deaminase, found in Bifidobacterium longum (strain DJO10A).